A 328-amino-acid chain; its full sequence is Hairy/enhancer-of-split related with YRPW motif-like protein (328 aa).

The tract at residues 1-54 (MKRPREPSGSDSESDGPIDVGREGELSQMARPLSTPSPSQMQARKKRRGIIEKR) is disordered. The transcriptional repression and interaction with NCOR1 and SIN3A stretch occupies residues 42–111 (QARKKRRGII…GGTGFFDARA (70 aa)). Residues 43 to 98 (ARKKRRGIIEKRRRDRINSSLSELRRLVPTAFEKQGSSKLEKAEVLQMTVDHLKML) form the bHLH domain. Residues 116–153 (FRSIGFRECLTEVIRYLGVLEGPSSRADPVRIRLLSHL) enclose the Orange domain. The interval 236-272 (LLPSRGASSTRRARPLERPAAPLPAAPSGRATRGSHM) is disordered.

This sequence belongs to the HEY family. As to quaternary structure, self-associates. Interacts with GATA4, GATA6, HES1, HEY1 and HEY2. Interacts with HDAC1, NCOR1 and SIN3A.

The protein resides in the nucleus. In terms of biological role, downstream effector of Notch signaling which may be required for cardiovascular development. Transcriptional repressor which binds preferentially to the canonical E box sequence 5'-CACGTG-3'. Represses transcription by the cardiac transcriptional activators GATA4 and GATA6. In Bos taurus (Bovine), this protein is Hairy/enhancer-of-split related with YRPW motif-like protein (HEYL).